Here is a 622-residue protein sequence, read N- to C-terminus: Threonine--tRNA ligase (622 aa).

Residues 1–141 form an editing domain region; that stretch reads MKTLLIHSDY…SRKITTERKE (141 aa). The catalytic stretch occupies residues 199-498; the sequence is PHVKYIKEKE…TLENKPPALP (300 aa). Zn(2+) contacts are provided by cysteine 291, histidine 343, and histidine 467.

Belongs to the class-II aminoacyl-tRNA synthetase family. In terms of assembly, homodimer. It depends on Zn(2+) as a cofactor.

The protein resides in the cytoplasm. The enzyme catalyses tRNA(Thr) + L-threonine + ATP = L-threonyl-tRNA(Thr) + AMP + diphosphate + H(+). Catalyzes the attachment of threonine to tRNA(Thr) in a two-step reaction: L-threonine is first activated by ATP to form Thr-AMP and then transferred to the acceptor end of tRNA(Thr). Also edits incorrectly charged L-seryl-tRNA(Thr). This Methanococcus maripaludis (strain C5 / ATCC BAA-1333) protein is Threonine--tRNA ligase.